A 123-amino-acid polypeptide reads, in one-letter code: ATP synthase epsilon chain (123 aa).

Belongs to the ATPase epsilon chain family. F-type ATPases have 2 components, CF(1) - the catalytic core - and CF(0) - the membrane proton channel. CF(1) has five subunits: alpha(3), beta(3), gamma(1), delta(1), epsilon(1). CF(0) has three main subunits: a, b and c.

It is found in the cell inner membrane. Its function is as follows. Produces ATP from ADP in the presence of a proton gradient across the membrane. In Helicobacter pylori (strain Shi470), this protein is ATP synthase epsilon chain.